A 298-amino-acid chain; its full sequence is Iron/alpha-ketoglutarate-dependent dioxygenase ausO (298 aa).

The Fe cation site is built by H130, D132, and H211.

It belongs to the PhyH family. In terms of assembly, homodimer. Fe cation serves as cofactor.

Its pathway is secondary metabolite biosynthesis; terpenoid biosynthesis. Iron/alpha-ketoglutarate-dependent dioxygenase; part of the gene cluster that mediates the biosynthesis of calidodehydroaustin, a fungal meroterpenoid. The first step of the pathway is the synthesis of 3,5-dimethylorsellinic acid by the polyketide synthase ausA. 3,5-dimethylorsellinic acid is then prenylated by the polyprenyl transferase ausN. Further epoxidation by the FAD-dependent monooxygenase ausM and cyclization by the probable terpene cyclase ausL lead to the formation of protoaustinoid A. Protoaustinoid A is then oxidized to spiro-lactone preaustinoid A3 by the combined action of the FAD-binding monooxygenases ausB and ausC, and the dioxygenase ausE. Acid-catalyzed keto-rearrangement and ring contraction of the tetraketide portion of preaustinoid A3 by ausJ lead to the formation of preaustinoid A4. The aldo-keto reductase ausK, with the help of ausH, is involved in the next step by transforming preaustinoid A4 into isoaustinone which is in turn hydroxylated by the P450 monooxygenase ausI to form austinolide. The cytochrome P450 monooxygenase ausG modifies austinolide to austinol. Austinol is further acetylated to austin by the O-acetyltransferase ausP, which spontaneously changes to dehydroaustin. The cytochrome P450 monooxygenase ausR then converts dehydroaustin is into 7-dehydrodehydroaustin. The hydroxylation catalyzed by ausR permits the O-acetyltransferase ausQ to add an additional acetyl group to the molecule, leading to the formation of acetoxydehydroaustin. The short chain dehydrogenase ausT catalyzes the reduction of the double bond present between carbon atoms 1 and 2 to convert 7-dehydrodehydroaustin into 1,2-dihydro-7-hydroxydehydroaustin. AusQ catalyzes not only an acetylation reaction but also the addition of the PKS ausV diketide product to 1,2-dihydro-7-hydroxydehydroaustin, forming precalidodehydroaustin. Finally, the iron/alpha-ketoglutarate-dependent dioxygenase converts precalidodehydroaustin into calidodehydroaustin. This is Iron/alpha-ketoglutarate-dependent dioxygenase ausO from Aspergillus calidoustus.